The chain runs to 409 residues: Tryptophan synthase beta chain (409 aa).

K95 carries the post-translational modification N6-(pyridoxal phosphate)lysine.

This sequence belongs to the TrpB family. In terms of assembly, tetramer of two alpha and two beta chains. Pyridoxal 5'-phosphate serves as cofactor.

It carries out the reaction (1S,2R)-1-C-(indol-3-yl)glycerol 3-phosphate + L-serine = D-glyceraldehyde 3-phosphate + L-tryptophan + H2O. Its pathway is amino-acid biosynthesis; L-tryptophan biosynthesis; L-tryptophan from chorismate: step 5/5. Functionally, the beta subunit is responsible for the synthesis of L-tryptophan from indole and L-serine. In Pseudomonas syringae pv. syringae (strain B728a), this protein is Tryptophan synthase beta chain.